A 1226-amino-acid polypeptide reads, in one-letter code: Phosphatidylinositol 3,4,5-trisphosphate 5-phosphatase 2B (1226 aa).

Positions 6–102 (WYHRDISRVR…GLVAPLLYPV (97 aa)) constitute an SH2 domain. The tract at residues 106–144 (SEANDESSDGDDEKPGSTFANSPPRAISPTATSPPSSSA) is disordered. The segment covering 108–117 (ANDESSDGDD) has biased composition (acidic residues). Over residues 127–144 (SPPRAISPTATSPPSSSA) the composition is skewed to low complexity. The NPXY motif signature appears at 906–909 (NPAY). Residue Tyr909 is modified to Phosphotyrosine. 2 disordered regions span residues 945–964 (RVTG…DFTE) and 985–1035 (SSAA…LSGK). A compositionally biased stretch (low complexity) spans 1011–1025 (HSSNSSLQLQSHKNN). The region spanning 1163 to 1226 (GAPETVRELL…ILENLPKIWD (64 aa)) is the SAM domain.

It belongs to the inositol 1,4,5-trisphosphate 5-phosphatase family. Tyrosine phosphorylated by the members of the SRC family after exposure to a diverse array of extracellular stimuli.

The protein resides in the cytoplasm. It is found in the cytosol. It localises to the cytoskeleton. Its subcellular location is the membrane. The protein localises to the cell projection. The protein resides in the filopodium. It is found in the lamellipodium. It localises to the nucleus. Its subcellular location is the nucleus speckle. The enzyme catalyses a 1,2-diacyl-sn-glycero-3-phospho-(1D-myo-inositol-3,4,5-trisphosphate) + H2O = a 1,2-diacyl-sn-glycero-3-phospho-(1D-myo-inositol-3,4-bisphosphate) + phosphate. Functionally, phosphatidylinositol (PtdIns) phosphatase that specifically hydrolyzes the 5-phosphate of phosphatidylinositol-3,4,5-trisphosphate (PtdIns(3,4,5)P3) to produce PtdIns(3,4)P2, thereby negatively regulating the PI3K (phosphoinositide 3-kinase) pathways. Plays a central role in regulation of PI3K-dependent insulin signaling, although the precise molecular mechanisms and signaling pathways remain unclear. Part of a signaling pathway that regulates actin cytoskeleton remodeling. Required for the maintenance and dynamic remodeling of actin structures as well as in endocytosis, having a major impact on ligand-induced EGFR internalization and degradation. Participates in regulation of cortical and submembraneous actin. Regulates cell adhesion and cell spreading. Acts as a negative regulator of the FC-gamma-RIIA receptor (FCGR2A). Mediates signaling from the FC-gamma-RIIB receptor (FCGR2B), playing a central role in terminating signal transduction from activating immune/hematopoietic cell receptor systems. May also hydrolyze PtdIns(1,3,4,5)P4, and could thus affect the levels of the higher inositol polyphosphates like InsP6. In Danio rerio (Zebrafish), this protein is Phosphatidylinositol 3,4,5-trisphosphate 5-phosphatase 2B (inppl1b).